The chain runs to 218 residues: Cytochrome b6 (218 aa).

The chain crosses the membrane as a helical span at residues 35 to 55 (IFYCLGGITLVCFLIQFATGF). C38 provides a ligand contact to heme c. H89 and H103 together coordinate heme b. The next 3 membrane-spanning stretches (helical) occupy residues 93-113 (ASMM…TGGF), 119-139 (LTWV…VTGY), and 189-209 (LHTF…FLMI). Heme b contacts are provided by H190 and H205.

This sequence belongs to the cytochrome b family. PetB subfamily. As to quaternary structure, the 4 large subunits of the cytochrome b6-f complex are cytochrome b6, subunit IV (17 kDa polypeptide, PetD), cytochrome f and the Rieske protein, while the 4 small subunits are PetG, PetL, PetM and PetN. The complex functions as a dimer. The cofactor is heme b. Requires heme c as cofactor.

It is found in the cellular thylakoid membrane. Functionally, component of the cytochrome b6-f complex, which mediates electron transfer between photosystem II (PSII) and photosystem I (PSI), cyclic electron flow around PSI, and state transitions. This chain is Cytochrome b6, found in Synechococcus sp. (strain WH7803).